The following is a 237-amino-acid chain: Oligoribonuclease, mitochondrial (237 aa).

A mitochondrion-targeting transit peptide spans 1–25; the sequence is MLGVSLGARLLRGVGGRRGQFGARG. The region spanning 43-207 is the Exonuclease domain; it reads MVWVDLEMTG…DDISESIKEL (165 aa). Mg(2+) is bound by residues Asp-47 and Glu-49. Ser-92 carries the phosphoserine modification. A Phosphotyrosine modification is found at Tyr-122. Mg(2+) is bound at residue Asp-147. Position 173 is an N6-acetyllysine (Lys-173). The active site involves His-194. Position 199 (Asp-199) interacts with Mg(2+).

This sequence belongs to the oligoribonuclease family. Homodimer. Homotetramer. Requires Mn(2+) as cofactor. Mg(2+) serves as cofactor.

It localises to the mitochondrion intermembrane space. Its subcellular location is the mitochondrion matrix. The protein resides in the mitochondrion. The protein localises to the cytoplasm. It is found in the nucleus. In terms of biological role, 3'-to-5'exoribonuclease that preferentially degrades DNA and RNA oligonucleotides composed of only two nucleotides. Binds and degrades longer oligonucleotides with a lower affinity. Plays dual roles in mitochondria, scavenging nanoRNAs (small RNA oligonucleotides of &lt;5 nucleotides) that are produced by the degradosome and clearing short RNAs that are generated by RNA processing. Essential for correct initiation of mitochondrial transcription, degrading mitochondrial RNA dinucleotides to prevent RNA-primed transcription at non-canonical sites in the mitochondrial genome. Essential for embryonic development. The sequence is that of Oligoribonuclease, mitochondrial (Rexo2) from Mus musculus (Mouse).